A 448-amino-acid chain; its full sequence is U-box domain-containing protein 30 (448 aa).

A U-box domain is found at 63–137; that stretch reads DIPSVFICPI…YTWFSQKYVL (75 aa). 2 ARM repeats span residues 179 to 219 and 221 to 260; these read LMAR…SLDL and SDSK…GLVE.

It carries out the reaction S-ubiquitinyl-[E2 ubiquitin-conjugating enzyme]-L-cysteine + [acceptor protein]-L-lysine = [E2 ubiquitin-conjugating enzyme]-L-cysteine + N(6)-ubiquitinyl-[acceptor protein]-L-lysine.. The protein operates within protein modification; protein ubiquitination. Functionally, functions as an E3 ubiquitin ligase. In Arabidopsis thaliana (Mouse-ear cress), this protein is U-box domain-containing protein 30 (PUB30).